Reading from the N-terminus, the 393-residue chain is Chorismate synthase (393 aa).

2 residues coordinate NADP(+): arginine 40 and arginine 46. FMN-binding positions include 129–131 (RSS), 249–250 (QA), glycine 301, 316–320 (KPIPT), and arginine 342.

This sequence belongs to the chorismate synthase family. Homotetramer. The cofactor is FMNH2.

It carries out the reaction 5-O-(1-carboxyvinyl)-3-phosphoshikimate = chorismate + phosphate. The protein operates within metabolic intermediate biosynthesis; chorismate biosynthesis; chorismate from D-erythrose 4-phosphate and phosphoenolpyruvate: step 7/7. Its function is as follows. Catalyzes the anti-1,4-elimination of the C-3 phosphate and the C-6 proR hydrogen from 5-enolpyruvylshikimate-3-phosphate (EPSP) to yield chorismate, which is the branch point compound that serves as the starting substrate for the three terminal pathways of aromatic amino acid biosynthesis. This reaction introduces a second double bond into the aromatic ring system. The sequence is that of Chorismate synthase from Geotalea daltonii (strain DSM 22248 / JCM 15807 / FRC-32) (Geobacter daltonii).